Here is a 327-residue protein sequence, read N- to C-terminus: Phosphate acyltransferase (327 aa).

Belongs to the PlsX family. Homodimer. Probably interacts with PlsY.

The protein resides in the cytoplasm. It catalyses the reaction a fatty acyl-[ACP] + phosphate = an acyl phosphate + holo-[ACP]. It participates in lipid metabolism; phospholipid metabolism. Functionally, catalyzes the reversible formation of acyl-phosphate (acyl-PO(4)) from acyl-[acyl-carrier-protein] (acyl-ACP). This enzyme utilizes acyl-ACP as fatty acyl donor, but not acyl-CoA. This chain is Phosphate acyltransferase, found in Mycoplasma mobile (strain ATCC 43663 / 163K / NCTC 11711) (Mesomycoplasma mobile).